Reading from the N-terminus, the 89-residue chain is Large ribosomal subunit protein eL43 (89 aa).

The disordered stretch occupies residues 1–28 (MVKKSKVGSTGRFGARYGRKAKRTVKDI). The C4-type zinc finger occupies 38-59 (CPKCDRPGVKRTHAGIWKCRKC).

The protein belongs to the eukaryotic ribosomal protein eL43 family. It depends on Zn(2+) as a cofactor.

This chain is Large ribosomal subunit protein eL43, found in Methanosphaera stadtmanae (strain ATCC 43021 / DSM 3091 / JCM 11832 / MCB-3).